The primary structure comprises 121 residues: MRVKGPSSKKHKKKILKLAKGYYGAKHRSFRRAKEQVLRSLQYEYRDRRLRKREFRRLWIQRINAAARLNGLSYSQFMHGLKLAGIDLNRKMLADIAVADPETFTKLAEKAKEAISQKSAA.

The protein belongs to the bacterial ribosomal protein bL20 family.

In terms of biological role, binds directly to 23S ribosomal RNA and is necessary for the in vitro assembly process of the 50S ribosomal subunit. It is not involved in the protein synthesizing functions of that subunit. The protein is Large ribosomal subunit protein bL20 of Persephonella marina (strain DSM 14350 / EX-H1).